Reading from the N-terminus, the 182-residue chain is Fucoxanthin-chlorophyll a-c binding protein D, chloroplastic (182 aa).

The N-terminal 4 residues, 1–4 (AMKM), are a transit peptide targeting the chloroplast. Transmembrane regions (helical) follow at residues 46-66 (IAML…PGML), 87-107 (IPPG…LAVM), and 148-168 (GRAA…NNKP).

It belongs to the fucoxanthin chlorophyll protein family. In terms of assembly, the LHC complex of chromophytic algae is composed of fucoxanthin, chlorophyll A and C bound non-covalently by fucoxanthin chlorophyll proteins (FCPs). The ratio of pigments in this LHC is; fucoxanthin: chlorophyll C: chlorophyll A; (0.6-1): (0.1-0.3): (1).

Its subcellular location is the plastid. It is found in the chloroplast thylakoid membrane. The light-harvesting complex (LHC) functions as a light receptor, it captures and delivers excitation energy to photosystems with which it is closely associated. Energy is transferred from the carotenoid and chlorophyll C (or B) to chlorophyll A and the photosynthetic reaction centers where it is used to synthesize ATP and reducing power. The chain is Fucoxanthin-chlorophyll a-c binding protein D, chloroplastic (FCPD) from Macrocystis pyrifera (Giant kelp).